A 365-amino-acid polypeptide reads, in one-letter code: Magnesium-chelatase subunit ChlI homolog (365 aa).

40–47 is an ATP binding site; the sequence is EKGTAKST. Positions 340–365 are disordered; it reads FKQQNNKDNEEKEEHKDDDVKKNMMK. The span at 344 to 365 shows a compositional bias: basic and acidic residues; it reads NNKDNEEKEEHKDDDVKKNMMK.

Belongs to the Mg-chelatase subunits D/I family.

The protein is Magnesium-chelatase subunit ChlI homolog of Methanocaldococcus jannaschii (strain ATCC 43067 / DSM 2661 / JAL-1 / JCM 10045 / NBRC 100440) (Methanococcus jannaschii).